The chain runs to 137 residues: Ciliary microtubule inner protein 1 (137 aa).

As to expression, expressed in airway epithelial cells, renal tubular cells, pancreatic acinar cells and epithelial cells of the stomach, duodenum, and gallbladder (at protein level).

It is found in the cell projection. It localises to the cilium. The chain is Ciliary microtubule inner protein 1 from Homo sapiens (Human).